A 156-amino-acid chain; its full sequence is Cyanate hydratase (156 aa).

Catalysis depends on residues Arg96, Glu99, and Ser122.

Belongs to the cyanase family.

It carries out the reaction cyanate + hydrogencarbonate + 3 H(+) = NH4(+) + 2 CO2. In terms of biological role, catalyzes the reaction of cyanate with bicarbonate to produce ammonia and carbon dioxide. The chain is Cyanate hydratase from Burkholderia cenocepacia (strain ATCC BAA-245 / DSM 16553 / LMG 16656 / NCTC 13227 / J2315 / CF5610) (Burkholderia cepacia (strain J2315)).